Here is a 1316-residue protein sequence, read N- to C-terminus: DNA-directed RNA polymerase subunit beta' (1316 aa).

Residues Cys-60, Cys-62, Cys-75, and Cys-78 each contribute to the Zn(2+) site. Mg(2+) contacts are provided by Asp-535, Asp-537, and Asp-539. 4 residues coordinate Zn(2+): Cys-891, Cys-968, Cys-975, and Cys-978.

It belongs to the RNA polymerase beta' chain family. In terms of assembly, the RNAP catalytic core consists of 2 alpha, 1 beta, 1 beta' and 1 omega subunit. When a sigma factor is associated with the core the holoenzyme is formed, which can initiate transcription. Mg(2+) is required as a cofactor. Zn(2+) serves as cofactor.

The catalysed reaction is RNA(n) + a ribonucleoside 5'-triphosphate = RNA(n+1) + diphosphate. In terms of biological role, DNA-dependent RNA polymerase catalyzes the transcription of DNA into RNA using the four ribonucleoside triphosphates as substrates. The polypeptide is DNA-directed RNA polymerase subunit beta' (Mycobacterium marinum (strain ATCC BAA-535 / M)).